Here is a 546-residue protein sequence, read N- to C-terminus: Amidase FG08078 (546 aa).

Catalysis depends on charge relay system residues lysine 129 and serine 204. The Acyl-ester intermediate role is filled by serine 228.

This sequence belongs to the amidase family.

It participates in mycotoxin biosynthesis. Functionally, amidase; part of the gene cluster that mediates the biosynthesis of butenolide, a mycotoxin that shows antibiotic activity but does not seem to play a major role in the spread of head blight in wheat. Butenolide is derived from glutamic acid via a 4-acetamido-2-butenoic acid intermediate. The predicted function of the NADH:flavin oxidoreductase FG08077, the cytochrome P450 monooxygenase FG08079, the decarboxylase FG08083, and the putative acetyltransferase FG08082 are consistent with this pathway, however, the respective activities of the butelonide biosynthesis cluster enzymes have still to be experimentally determined. In Gibberella zeae (strain ATCC MYA-4620 / CBS 123657 / FGSC 9075 / NRRL 31084 / PH-1) (Wheat head blight fungus), this protein is Amidase FG08078.